Reading from the N-terminus, the 117-residue chain is Large ribosomal subunit protein uL18 (117 aa).

The protein belongs to the universal ribosomal protein uL18 family. As to quaternary structure, part of the 50S ribosomal subunit; part of the 5S rRNA/L5/L18/L25 subcomplex. Contacts the 5S and 23S rRNAs.

This is one of the proteins that bind and probably mediate the attachment of the 5S RNA into the large ribosomal subunit, where it forms part of the central protuberance. This chain is Large ribosomal subunit protein uL18, found in Nitrosococcus oceani (strain ATCC 19707 / BCRC 17464 / JCM 30415 / NCIMB 11848 / C-107).